Consider the following 527-residue polypeptide: N-acetylglutamate synthase, mitochondrial (527 aa).

A mitochondrion-targeting transit peptide spans 1 to 18 (MATAWVATALRSAAAARR). The disordered stretch occupies residues 14–91 (AAARRLRSPG…PLESPAPPAG (78 aa)). The segment at 19 to 369 (LRSPGGPGGS…CGTLFKNAER (351 aa)) is amino-acid kinase domain (AAK). Over residues 54–63 (AHAEDAEGAK) the composition is skewed to basic and acidic residues. Residues 77–89 (TPLPTPLESPAPP) show a composition bias toward pro residues. The 152-residue stretch at 368–519 (ERMLRVRNLD…HAKGLPDSFC (152 aa)) folds into the N-acetyltransferase domain. Substrate is bound by residues lysine 394, lysine 437, and 467 to 472 (RSRVTN).

The protein belongs to the acetyltransferase family. As to quaternary structure, homodimer. Homotetramer. Post-translationally, probably processed by mitochondrial processing peptidase (MPP). The long form has not yet been isolated. As to expression, highly expressed in the liver and small intestine. Weakly expressed in the kidney, spleen and testis.

Its subcellular location is the mitochondrion matrix. The catalysed reaction is L-glutamate + acetyl-CoA = N-acetyl-L-glutamate + CoA + H(+). It participates in amino-acid biosynthesis; L-arginine biosynthesis; N(2)-acetyl-L-ornithine from L-glutamate: step 1/4. With respect to regulation, increased by L-arginine. Functionally, plays a role in the regulation of ureagenesis by producing the essential cofactor N-acetylglutamate (NAG), thus modulating carbamoylphosphate synthase I (CPS1) activity. The chain is N-acetylglutamate synthase, mitochondrial (Nags) from Mus musculus (Mouse).